The primary structure comprises 117 residues: Acylphosphatase (117 aa).

Residues 21–107 (RWRFRIRGLV…TGADWFEIRP (87 aa)) form the Acylphosphatase-like domain. Active-site residues include Arg-36 and Asn-54.

The protein belongs to the acylphosphatase family.

It catalyses the reaction an acyl phosphate + H2O = a carboxylate + phosphate + H(+). The chain is Acylphosphatase (acyP) from Synechococcus sp. (strain RCC307).